Consider the following 394-residue polypeptide: 1-deoxy-D-xylulose 5-phosphate reductoisomerase (394 aa).

T12, G13, S14, I15, G38, N41, and N132 together coordinate NADPH. A 1-deoxy-D-xylulose 5-phosphate-binding site is contributed by K133. Position 134 (E134) interacts with NADPH. D156 provides a ligand contact to Mn(2+). S157, E158, S182, and H205 together coordinate 1-deoxy-D-xylulose 5-phosphate. E158 serves as a coordination point for Mn(2+). G211 serves as a coordination point for NADPH. 1-deoxy-D-xylulose 5-phosphate is bound by residues S218, N223, K224, and E227. Residue E227 coordinates Mn(2+).

The protein belongs to the DXR family. The cofactor is Mg(2+). Requires Mn(2+) as cofactor.

The enzyme catalyses 2-C-methyl-D-erythritol 4-phosphate + NADP(+) = 1-deoxy-D-xylulose 5-phosphate + NADPH + H(+). Its pathway is isoprenoid biosynthesis; isopentenyl diphosphate biosynthesis via DXP pathway; isopentenyl diphosphate from 1-deoxy-D-xylulose 5-phosphate: step 1/6. Its function is as follows. Catalyzes the NADPH-dependent rearrangement and reduction of 1-deoxy-D-xylulose-5-phosphate (DXP) to 2-C-methyl-D-erythritol 4-phosphate (MEP). This is 1-deoxy-D-xylulose 5-phosphate reductoisomerase from Pseudarthrobacter chlorophenolicus (strain ATCC 700700 / DSM 12829 / CIP 107037 / JCM 12360 / KCTC 9906 / NCIMB 13794 / A6) (Arthrobacter chlorophenolicus).